The following is a 433-amino-acid chain: Elongation factor 1-alpha (433 aa).

In terms of domain architecture, tr-type G spans 5 to 227 (KPHLNLVVIG…AFDFFKEPPR (223 aa)). Positions 14 to 21 (GHIDHGKS) are G1. A GTP-binding site is contributed by 14-21 (GHIDHGKS). Residue serine 21 coordinates Mg(2+). The tract at residues 70–74 (GITID) is G2. The G3 stretch occupies residues 91–94 (DAPG). GTP contacts are provided by residues 91–95 (DAPGH) and 153–156 (NKMD). Residues 153-156 (NKMD) are G4. The tract at residues 192–194 (SAW) is G5.

The protein belongs to the TRAFAC class translation factor GTPase superfamily. Classic translation factor GTPase family. EF-Tu/EF-1A subfamily.

It localises to the cytoplasm. It carries out the reaction GTP + H2O = GDP + phosphate + H(+). Its function is as follows. GTP hydrolase that promotes the GTP-dependent binding of aminoacyl-tRNA to the A-site of ribosomes during protein biosynthesis. The sequence is that of Elongation factor 1-alpha from Thermofilum pendens (strain DSM 2475 / Hrk 5).